A 293-amino-acid chain; its full sequence is MQISDHLHRFLFENTPVRGSIVHLDDSFQQSLQHHDFPQILRQALGELMAASALLAATLKLKGGALVLQVQGKGPLKLLVVECTSDLGIRATAKWSGELDGMSFSDMVSNGHFVITLDPRDGGQPYQGIVPVEGGSIAEILQSYMQRSEQIDTRMWLACDGKRAAGMLVQKMPDQPDAADPDAWNRIIMLADTVRDEELLDLSAVSLIKRLFNEEDVRLFKEQPIKFHCGCSRESVGNMLRMLGEEEVADILAEQHTIDINCDFCNAEYHFDEVDAEQLFTTEIVMPGNDVRH.

2 cysteine pairs are disulfide-bonded: Cys229/Cys231 and Cys262/Cys265.

It belongs to the HSP33 family. Under oxidizing conditions two disulfide bonds are formed involving the reactive cysteines. Under reducing conditions zinc is bound to the reactive cysteines and the protein is inactive.

Its subcellular location is the cytoplasm. Functionally, redox regulated molecular chaperone. Protects both thermally unfolding and oxidatively damaged proteins from irreversible aggregation. Plays an important role in the bacterial defense system toward oxidative stress. This chain is 33 kDa chaperonin, found in Methylobacillus flagellatus (strain ATCC 51484 / DSM 6875 / VKM B-1610 / KT).